Here is a 182-residue protein sequence, read N- to C-terminus: Methionine-R-sulfoxide reductase B2, mitochondrial (182 aa).

The transit peptide at 1–20 (MARLLWLLRGLTLGTAPRRA) directs the protein to the mitochondrion. The 130-residue stretch at 51 to 180 (KSEWQKKLTP…NSVALKFKPR (130 aa)) folds into the MsrB domain. Zn(2+) contacts are provided by cysteine 90, cysteine 93, cysteine 146, and cysteine 149. Cysteine 169 acts as the Nucleophile in catalysis.

It belongs to the MsrB Met sulfoxide reductase family. Interacts with DAOA; the interaction is direct. Zn(2+) serves as cofactor. Ubiquitous. Detected in retina, ocular ciliary body, skeletal muscle, heart, colon, bone marrow, cerebellum, small intestine, fetal brain, fetal liver, kidney, spinal cord, lung, placenta and prostate.

It is found in the mitochondrion. It catalyses the reaction L-methionyl-[protein] + [thioredoxin]-disulfide + H2O = L-methionyl-(R)-S-oxide-[protein] + [thioredoxin]-dithiol. It carries out the reaction [thioredoxin]-disulfide + L-methionine + H2O = L-methionine (R)-S-oxide + [thioredoxin]-dithiol. Methionine-sulfoxide reductase that specifically reduces methionine (R)-sulfoxide back to methionine. While in many cases, methionine oxidation is the result of random oxidation following oxidative stress, methionine oxidation is also a post-translational modification that takes place on specific residue. Upon oxidative stress, may play a role in the preservation of mitochondrial integrity by decreasing the intracellular reactive oxygen species build-up through its scavenging role, hence contributing to cell survival and protein maintenance. The polypeptide is Methionine-R-sulfoxide reductase B2, mitochondrial (MSRB2) (Homo sapiens (Human)).